A 75-amino-acid polypeptide reads, in one-letter code: Small ribosomal subunit protein bS18 (75 aa).

Belongs to the bacterial ribosomal protein bS18 family. Part of the 30S ribosomal subunit. Forms a tight heterodimer with protein bS6.

Its function is as follows. Binds as a heterodimer with protein bS6 to the central domain of the 16S rRNA, where it helps stabilize the platform of the 30S subunit. The sequence is that of Small ribosomal subunit protein bS18 from Psychromonas ingrahamii (strain DSM 17664 / CCUG 51855 / 37).